We begin with the raw amino-acid sequence, 514 residues long: Extracellular exo-inulinase (514 aa).

An N-terminal signal peptide occupies residues 1 to 18; sequence MRAFLALIFLTFVMNVES. Substrate-binding positions include 33 to 34 and Q52; that span reads ND. D34 serves as the catalytic Nucleophile. An N-linked (GlcNAc...) asparagine glycan is attached at N56. The substrate site is built by W60 and S95. N-linked (GlcNAc...) asparagine glycans are attached at residues N104 and N110. 162–163 contributes to the substrate binding site; it reads RD. N197 and N203 each carry an N-linked (GlcNAc...) asparagine glycan. Substrate is bound by residues E214 and W300. The active-site Proton donor/acceptor is E214. 4 N-linked (GlcNAc...) asparagine glycosylation sites follow: N357, N371, N389, and N422.

The protein belongs to the glycosyl hydrolase 32 family.

The protein localises to the secreted. The catalysed reaction is Hydrolysis of terminal, non-reducing (2-&gt;1)- and (2-&gt;6)-linked beta-D-fructofuranose residues in fructans.. Functionally, exo-inulinase involved in utilization of the plant storage polymer inulin, consisting of fructooligosaccharides with a degree of polymerization (DP) value from 2 to 60. Splits off terminal fructose units successively from the non-reducing end of the inulin molecule. This chain is Extracellular exo-inulinase, found in Meyerozyma guilliermondii (strain ATCC 6260 / CBS 566 / DSM 6381 / JCM 1539 / NBRC 10279 / NRRL Y-324) (Yeast).